The chain runs to 233 residues: Lipoprotein-releasing system ATP-binding protein LolD (233 aa).

Positions 6-233 (LQCDNLCKRY…TAELSLMGAE (228 aa)) constitute an ABC transporter domain. 42 to 49 (GSSGSGKS) lines the ATP pocket.

The protein belongs to the ABC transporter superfamily. Lipoprotein translocase (TC 3.A.1.125) family. As to quaternary structure, the complex is composed of two ATP-binding proteins (LolD) and two transmembrane proteins (LolC and LolE).

It is found in the cell inner membrane. Functionally, part of the ABC transporter complex LolCDE involved in the translocation of mature outer membrane-directed lipoproteins, from the inner membrane to the periplasmic chaperone, LolA. Responsible for the formation of the LolA-lipoprotein complex in an ATP-dependent manner. In Shigella boydii serotype 4 (strain Sb227), this protein is Lipoprotein-releasing system ATP-binding protein LolD.